We begin with the raw amino-acid sequence, 101 residues long: uncharacterized protein (101 aa).

The segment at 76–101 (KGNVTRRRKKTHLGNDDGKKEAQEKM) is disordered. Basic and acidic residues predominate over residues 88–101 (LGNDDGKKEAQEKM).

This is an uncharacterized protein from Homo sapiens (Human).